Reading from the N-terminus, the 335-residue chain is Probable pectinesterase 29 (335 aa).

The signal sequence occupies residues 1-24; that stretch reads MGTHRIFIGLIALCCFCLPHLIEA. An N-linked (GlcNAc...) asparagine glycan is attached at Asn-43. Asp-166 serves as the catalytic Proton donor. Catalysis depends on Asp-187, which acts as the Nucleophile. Substrate contacts are provided by Arg-248 and Trp-250. A glycan (N-linked (GlcNAc...) asparagine) is linked at Asn-262.

Belongs to the pectinesterase family. As to expression, expressed in flower buds.

The protein resides in the secreted. The protein localises to the cell wall. It carries out the reaction [(1-&gt;4)-alpha-D-galacturonosyl methyl ester](n) + n H2O = [(1-&gt;4)-alpha-D-galacturonosyl](n) + n methanol + n H(+). It functions in the pathway glycan metabolism; pectin degradation; 2-dehydro-3-deoxy-D-gluconate from pectin: step 1/5. In terms of biological role, acts in the modification of cell walls via demethylesterification of cell wall pectin. The protein is Probable pectinesterase 29 (PME29) of Arabidopsis thaliana (Mouse-ear cress).